The primary structure comprises 133 residues: p53 and DNA damage-regulated protein 1 (133 aa).

Belongs to the prefoldin subunit beta family. As to quaternary structure, component of the PAQosome complex which is responsible for the biogenesis of several protein complexes and which consists of R2TP complex members RUVBL1, RUVBL2, RPAP3 and PIH1D1, URI complex members PFDN2, PFDN6, PDRG1, UXT and URI1 as well as ASDURF, POLR2E and DNAAF10/WDR92.

Its subcellular location is the cytoplasm. Functionally, may play a role in chaperone-mediated protein folding. The protein is p53 and DNA damage-regulated protein 1 (Pdrg1) of Mus musculus (Mouse).